Consider the following 117-residue polypeptide: Large ribosomal subunit protein eL30B (117 aa).

Residues 1–14 show a composition bias toward low complexity; the sequence is MSAAPTTAPVAAVS. The tract at residues 1–22 is disordered; that stretch reads MSAAPTTAPVAAVSKKGKKSGD.

Belongs to the eukaryotic ribosomal protein eL30 family. Component of the large ribosomal subunit (LSU). Mature yeast ribosomes consist of a small (40S) and a large (60S) subunit. The 40S small subunit contains 1 molecule of ribosomal RNA (18S rRNA) and at least 33 different proteins. The large 60S subunit contains 3 rRNA molecules (25S, 5.8S and 5S rRNA) and at least 46 different proteins.

Its subcellular location is the cytoplasm. Component of the ribosome, a large ribonucleoprotein complex responsible for the synthesis of proteins in the cell. The small ribosomal subunit (SSU) binds messenger RNAs (mRNAs) and translates the encoded message by selecting cognate aminoacyl-transfer RNA (tRNA) molecules. The large subunit (LSU) contains the ribosomal catalytic site termed the peptidyl transferase center (PTC), which catalyzes the formation of peptide bonds, thereby polymerizing the amino acids delivered by tRNAs into a polypeptide chain. The nascent polypeptides leave the ribosome through a tunnel in the LSU and interact with protein factors that function in enzymatic processing, targeting, and the membrane insertion of nascent chains at the exit of the ribosomal tunnel. The sequence is that of Large ribosomal subunit protein eL30B (rpl3002) from Schizosaccharomyces pombe (strain 972 / ATCC 24843) (Fission yeast).